A 180-amino-acid chain; its full sequence is Translation initiation factor IF-3 (180 aa).

This sequence belongs to the IF-3 family. As to quaternary structure, monomer.

It localises to the cytoplasm. In terms of biological role, IF-3 binds to the 30S ribosomal subunit and shifts the equilibrium between 70S ribosomes and their 50S and 30S subunits in favor of the free subunits, thus enhancing the availability of 30S subunits on which protein synthesis initiation begins. In Pectobacterium atrosepticum (strain SCRI 1043 / ATCC BAA-672) (Erwinia carotovora subsp. atroseptica), this protein is Translation initiation factor IF-3.